Reading from the N-terminus, the 464-residue chain is Clusterin-like protein 1 (464 aa).

Positions 1 to 20 (MQPPLFVISVYLLWLKYCDS) are cleaved as a signal peptide. Residues 56–109 (IKQMKIMMERREEEHAKLMKALKKCKEEKQEAQKLMNEVQERLEEEEKLCQASS) adopt a coiled-coil conformation. 5 disulfide bridges follow: Cys105–Cys331, Cys116–Cys323, Cys119–Cys320, Cys124–Cys313, and Cys131–Cys303. Asn195, Asn255, Asn309, Asn349, Asn398, and Asn429 each carry an N-linked (GlcNAc...) asparagine glycan.

It belongs to the clusterin family.

The protein resides in the secreted. This is Clusterin-like protein 1 from Rattus norvegicus (Rat).